Here is a 216-residue protein sequence, read N- to C-terminus: Adenylate kinase (216 aa).

Position 10-15 (glycine 10–threonine 15) interacts with ATP. The segment at serine 30–valine 59 is NMP. AMP-binding positions include threonine 31, arginine 36, leucine 57–valine 59, glycine 85–arginine 88, and glutamine 92. Residues glycine 126–aspartate 163 form an LID region. Arginine 127 contributes to the ATP binding site. 2 residues coordinate Zn(2+): cysteine 130 and cysteine 133. Threonine 136 to tyrosine 137 is an ATP binding site. Residues cysteine 150 and cysteine 153 each coordinate Zn(2+). AMP contacts are provided by arginine 160 and arginine 171. Glutamine 199 contributes to the ATP binding site.

It belongs to the adenylate kinase family. Monomer.

Its subcellular location is the cytoplasm. It carries out the reaction AMP + ATP = 2 ADP. It functions in the pathway purine metabolism; AMP biosynthesis via salvage pathway; AMP from ADP: step 1/1. Catalyzes the reversible transfer of the terminal phosphate group between ATP and AMP. Plays an important role in cellular energy homeostasis and in adenine nucleotide metabolism. This chain is Adenylate kinase, found in Clostridioides difficile (strain 630) (Peptoclostridium difficile).